Here is a 163-residue protein sequence, read N- to C-terminus: Retinoic acid receptor responder protein 2 (163 aa).

An N-terminal signal peptide occupies residues 1 to 20 (MRRLLIPLALWLGAVGVGVA). 3 cysteine pairs are disulfide-bonded: Cys-77/Cys-87, Cys-98/Cys-117, and Cys-101/Cys-135. Residues 158–163 (KALPRS) constitute a propeptide that is removed on maturation.

Post-translationally, secreted in an inactive precursor form, prochemerin, which is proteolytically processed by a variety of extracellular proteases to generate forms with differing levels of bioactivity. For example, the removal of six amino acids results in chemerin-157, which exhibits the highest activity, while removal of seven amino acids results in chemerin-156 which has slightly less activity. Some proteases are able to cleave at more than one site and chemerin forms may be sequentially processed by different enzymes to modulate activity levels. The coordinated expression and activity of chemerin-modifying enzymes is essential for regulating its bioactivation, inactivation and, consequently, biological function. Cathepsin G cleaves seven C-terminal amino acids from prochemerin (chemerin-156), elastase is able to cleave six (chemerin-157), eight (chemerin-155) or eleven (chemerin-152), plasmin cleaves five amino acids (chemerin-158), and tryptase cleaves five (chemerin-158) or eight (chemerin-155). Multiple cleavages might be required to fully activate chemerin, with an initial tryptase cleavage resulting in chemerin with low activity (chemerin-158), and a second cleavage by carboxypeptidase N or B producing highly active chemerin (chemerin-157).

The protein localises to the secreted. Adipocyte-secreted protein (adipokine) that regulates adipogenesis, metabolism and inflammation through activation of the chemokine-like receptor 1 (CMKLR1). Also acts as a ligand for CMKLR2. Can also bind to C-C chemokine receptor-like 2 (CCRL2), but with a lower affinity than it does to CMKLR1 or CMKLR2. Positively regulates adipocyte differentiation, modulates the expression of adipocyte genes involved in lipid and glucose metabolism and might play a role in angiogenesis, a process essential for the expansion of white adipose tissue. Also acts as a pro-inflammatory adipokine, causing an increase in secretion of pro-inflammatory and prodiabetic adipokines, which further impair adipose tissue metabolic function and have negative systemic effects including impaired insulin sensitivity, altered glucose and lipid metabolism, and a decrease in vascular function in other tissues. Can have both pro- and anti-inflammatory properties depending on the modality of enzymatic cleavage by different classes of proteases. Acts as a chemotactic factor for leukocyte populations expressing CMKLR1, particularly immature plasmacytoid dendritic cells, but also immature myeloid DCs, macrophages and natural killer cells. Exerts an anti-inflammatory role by preventing TNF/TNFA-induced VCAM1 expression and monocytes adhesion in vascular endothelial cells. The effect is mediated via inhibiting activation of NF-kappa-B and CRK/p38 through stimulation of AKT1/NOS3 signaling and nitric oxide production. Exhibits an antimicrobial function in the skin. This is Retinoic acid receptor responder protein 2 (RARRES2) from Pongo abelii (Sumatran orangutan).